The chain runs to 505 residues: ATP synthase subunit alpha (505 aa).

Gly-169–Thr-176 provides a ligand contact to ATP.

The protein belongs to the ATPase alpha/beta chains family. In terms of assembly, F-type ATPases have 2 components, CF(1) - the catalytic core - and CF(0) - the membrane proton channel. CF(1) has five subunits: alpha(3), beta(3), gamma(1), delta(1), epsilon(1). CF(0) has three main subunits: a(1), b(2) and c(9-12). The alpha and beta chains form an alternating ring which encloses part of the gamma chain. CF(1) is attached to CF(0) by a central stalk formed by the gamma and epsilon chains, while a peripheral stalk is formed by the delta and b chains.

Its subcellular location is the cell membrane. The catalysed reaction is ATP + H2O + 4 H(+)(in) = ADP + phosphate + 5 H(+)(out). Its function is as follows. Produces ATP from ADP in the presence of a proton gradient across the membrane. The alpha chain is a regulatory subunit. The sequence is that of ATP synthase subunit alpha from Alkaliphilus metalliredigens (strain QYMF).